The primary structure comprises 157 residues: MGSEILVGIGEFRVAKGAVLKTIGLGSCVGIALYDPKLRLGGLAHVMLPQSGNGTKRSAKYADHAVEMMTEAMERLGSDRKRIVAKMAGGAQIFKHMTMDMLRIGDRNAEAIRTILRDYGIRIVSEDLGGDEGRTVYFFTNDGRMLVKYSRGGELWI.

It belongs to the CheD family.

The catalysed reaction is L-glutaminyl-[protein] + H2O = L-glutamyl-[protein] + NH4(+). Probably deamidates glutamine residues to glutamate on methyl-accepting chemotaxis receptors (MCPs), playing an important role in chemotaxis. The protein is Probable chemoreceptor glutamine deamidase CheD of Archaeoglobus fulgidus (strain ATCC 49558 / DSM 4304 / JCM 9628 / NBRC 100126 / VC-16).